The sequence spans 420 residues: Reticulon-4 receptor-like 2 (420 aa).

An N-terminal signal peptide occupies residues 1-46 (MLPGLRRLLQAPASACLLLMLLALPLAAPSCPMLCTCYSSPPTVSC). 2 disulfides stabilise this stretch: C31/C37 and C35/C46. The LRRNT domain occupies 47-60 (QANNFSSVPLSLPP). A glycan (N-linked (GlcNAc...) asparagine) is linked at N50. 8 LRR repeats span residues 61–82 (STQR…TFGS), 83–104 (NLLT…TFRH), 107–129 (ALEE…TFQG), 132–153 (RLQS…IFRG), 156–177 (SLQY…LFAD), 180–201 (NLSH…VFRG), 204–225 (SLDR…AFRG), and 228–249 (RLTI…ALAD). An N-linked (GlcNAc...) asparagine glycan is attached at N93. N-linked (GlcNAc...) asparagine glycosylation occurs at N236. Positions 261 to 312 (NPWACDCRARPLWAWFQRARVSSSDVTCATPPERQGRDLRALREADFQACPP) constitute an LRRCT domain. Disulfide bonds link C265-C288 and C267-C310. Positions 308–399 (QACPPAAPTR…CQAPPDSRGP (92 aa)) are disordered. Residues 315 to 327 (PTRPGSRARGNSS) form an important for interaction with MAG region. Positions 351-360 (LPAEDSRGRQ) are enriched in basic and acidic residues. C390 is lipidated: GPI-anchor amidated cysteine. A propeptide spans 391-420 (QAPPDSRGPALSAGLPSPLLCLLLLVPHHL) (removed in mature form).

It belongs to the Nogo receptor family. As to quaternary structure, interaction with MAG is controversial, and may be indirect. Does not interact with MAG, OMG and RTN4. Interacts with MAG. In terms of processing, undergoes zinc metalloproteinase-mediated ectodomain shedding in neuroblastoma cells; is released both as a full-length ectodomain and an N-terminal fragment containing the leucine-rich repeat (LRR) region of the protein. Post-translationally, N-glycosylated. In terms of tissue distribution, highly expressed in brain and liver. Expressed at lower levels in kidney, mammary gland, placenta, skeletal muscle, spleen and thyroid.

It localises to the cell membrane. The protein localises to the membrane raft. It is found in the cell projection. The protein resides in the dendrite. Its subcellular location is the perikaryon. It localises to the axon. In terms of biological role, cell surface receptor that plays a functionally redundant role in the inhibition of neurite outgrowth mediated by MAG. Plays a functionally redundant role in postnatal brain development. Contributes to normal axon migration across the brain midline and normal formation of the corpus callosum. Does not seem to play a significant role in regulating axon regeneration in the adult central nervous system. Protects motoneurons against apoptosis; protection against apoptosis is probably mediated by MAG. Like other family members, plays a role in restricting the number dendritic spines and the number of synapses that are formed during brain development. Signaling mediates activation of Rho and downstream reorganization of the actin cytoskeleton. This chain is Reticulon-4 receptor-like 2, found in Homo sapiens (Human).